The following is a 236-amino-acid chain: UPF0257 lipoprotein YnfC (236 aa).

The signal sequence occupies residues Met1–Gly16. Cys17 carries N-palmitoyl cysteine lipidation. The S-diacylglycerol cysteine moiety is linked to residue Cys17.

The protein belongs to the UPF0257 family.

The protein resides in the cell membrane. The protein is UPF0257 lipoprotein YnfC (ynfC) of Shigella flexneri.